An 88-amino-acid polypeptide reads, in one-letter code: Guanine nucleotide-binding protein subunit gamma (88 aa).

Residue cysteine 84 is the site of S-palmitoyl cysteine attachment. Cysteine 85 carries the cysteine methyl ester modification. Cysteine 85 carries the S-farnesyl cysteine lipid modification. The propeptide at 86 to 88 is removed in mature form; that stretch reads TIM.

It belongs to the G protein gamma family. In terms of assembly, g proteins are composed of 3 units, alpha, beta and gamma.

It is found in the membrane. The sequence is that of Guanine nucleotide-binding protein subunit gamma from Candida glabrata (strain ATCC 2001 / BCRC 20586 / JCM 3761 / NBRC 0622 / NRRL Y-65 / CBS 138) (Yeast).